Here is a 396-residue protein sequence, read N- to C-terminus: Putative cystathionine beta-lyase (396 aa).

N6-(pyridoxal phosphate)lysine is present on Lys-210.

Belongs to the trans-sulfuration enzymes family. Pyridoxal 5'-phosphate serves as cofactor.

The catalysed reaction is L,L-cystathionine + H2O = L-homocysteine + pyruvate + NH4(+). The enzyme catalyses an S-substituted L-cysteine + H2O = a thiol + pyruvate + NH4(+). It functions in the pathway amino-acid biosynthesis; L-methionine biosynthesis via de novo pathway; L-homocysteine from L-cystathionine: step 1/1. Catalyzes the cleavage of cystathionine to homocysteine, pyruvate and ammonia during methionine biosynthesis. This is Putative cystathionine beta-lyase (metC) from Rhizobium johnstonii (strain DSM 114642 / LMG 32736 / 3841) (Rhizobium leguminosarum bv. viciae).